The following is a 49-amino-acid chain: Lectin alpha chain (49 aa).

The protein belongs to the leguminous lectin family. As to quaternary structure, homotetramer. The beta and gamma chains are produced by partial proteolytic processing of the lectin alpha chain by an asparaginyl endopeptidase. Mixture of 60% alpha lectin and 40% of its beta and gamma proteolytic fragments. Seed.

Functionally, D-mannose/D-glucose-binding lectin. This chain is Lectin alpha chain, found in Dioclea violacea.